We begin with the raw amino-acid sequence, 572 residues long: Glypican-5 (572 aa).

An N-terminal signal peptide occupies residues 1-24 (MDAQTWPVGFRCLLLLALVGSARS). N-linked (GlcNAc...) asparagine glycosylation is found at Asn120 and Asn237. Positions 355–375 (SPRCSFDQSKEKHGMKTTTRN) are disordered. O-linked (Xyl...) (glycosaminoglycan) serine glycosylation is found at Ser441, Ser486, Ser495, Ser507, and Ser509. N-linked (GlcNAc...) asparagine glycosylation is present at Asn527.

This sequence belongs to the glypican family. In terms of tissue distribution, in adult, primarily expressed in the brain. Also detected in fetal brain, lung and liver.

It is found in the cell membrane. The protein resides in the secreted. Its subcellular location is the extracellular space. Its function is as follows. Cell surface proteoglycan that bears heparan sulfate. This chain is Glypican-5 (GPC5), found in Homo sapiens (Human).